Consider the following 131-residue polypeptide: Bypass of stop codon protein 4 (131 aa).

This Saccharomyces cerevisiae (strain ATCC 204508 / S288c) (Baker's yeast) protein is Bypass of stop codon protein 4 (BSC4).